Reading from the N-terminus, the 88-residue chain is Small ribosomal subunit protein bS18B (88 aa).

It belongs to the bacterial ribosomal protein bS18 family. In terms of assembly, part of the 30S ribosomal subunit. Forms a tight heterodimer with protein bS6.

Its function is as follows. Binds as a heterodimer with protein bS6 to the central domain of the 16S rRNA, where it helps stabilize the platform of the 30S subunit. The sequence is that of Small ribosomal subunit protein bS18B from Mycolicibacterium paratuberculosis (strain ATCC BAA-968 / K-10) (Mycobacterium paratuberculosis).